A 130-amino-acid polypeptide reads, in one-letter code: Small ribosomal subunit protein uS11 (130 aa).

It belongs to the universal ribosomal protein uS11 family. In terms of assembly, part of the 30S ribosomal subunit. Interacts with proteins S7 and S18. Binds to IF-3.

In terms of biological role, located on the platform of the 30S subunit, it bridges several disparate RNA helices of the 16S rRNA. Forms part of the Shine-Dalgarno cleft in the 70S ribosome. In Prochlorococcus marinus (strain MIT 9313), this protein is Small ribosomal subunit protein uS11.